A 218-amino-acid chain; its full sequence is Glutathione S-transferase Mu 2 (218 aa).

The GST N-terminal domain maps to P2 to G88. Y7–W8 contributes to the glutathione binding site. Phosphoserine occurs at positions 27 and 44. Residues R43–W46, K50, N59–L60, and Q72–S73 contribute to the glutathione site. The region spanning S90–V208 is the GST C-terminal domain. Y116 contributes to the substrate binding site.

This sequence belongs to the GST superfamily. Mu family. Homodimer. Muscle.

The protein localises to the cytoplasm. The enzyme catalyses RX + glutathione = an S-substituted glutathione + a halide anion + H(+). It catalyses the reaction 11(S)-hydroxy-14(S),15(S)-epoxy-(5Z,8Z,12E)-eicosatrienoate + glutathione = (11S,15S)-dihydroxy-14(R)-S-glutathionyl-(5Z,8Z,12E)-eicosatrienoate. Functionally, conjugation of reduced glutathione to a wide number of exogenous and endogenous hydrophobic electrophiles. Participates in the formation of novel hepoxilin regioisomers. The sequence is that of Glutathione S-transferase Mu 2 from Homo sapiens (Human).